Reading from the N-terminus, the 163-residue chain is uncharacterized protein (163 aa).

Residues 1–10 (MTHPLPHDSH) are compositionally biased toward basic and acidic residues. Disordered stretches follow at residues 1–21 (MTHP…VNKS) and 71–112 (SKQP…EQRR). The segment covering 90–105 (PASSLQDHSRLTSLSR) has biased composition (polar residues).

This is an uncharacterized protein from Homo sapiens (Human).